Here is a 297-residue protein sequence, read N- to C-terminus: Palmitoyl-protein thioesterase ABHD10, mitochondrial (297 aa).

A mitochondrion-targeting transit peptide spans 1-43; that stretch reads MAAWVPCRKWGWAAVSFGRHRGLIASLARKPPWAWWLSACRQK. Residues 69–181 enclose the AB hydrolase-1 domain; that stretch reads IIFIPGYLSN…GVVTQFHSLP (113 aa). Residues serine 143, aspartate 240, and histidine 270 each act as charge relay system in the active site.

It belongs to the AB hydrolase superfamily. Expressed in epididymal sperm but not in testicular sperm (at protein level).

The protein localises to the mitochondrion. The enzyme catalyses S-hexadecanoyl-L-cysteinyl-[protein] + H2O = L-cysteinyl-[protein] + hexadecanoate + H(+). It carries out the reaction mycophenolic acid O-acyl-beta-D-glucuronide + H2O = mycophenolate + D-glucuronate + H(+). Its activity is regulated as follows. Inhibited by palmostatin-B. Acts as an acyl-protein thioesterase that hydrolyzes fatty acids from acylated residues in proteins. Regulates the mitochondrial S-depalmitoylation of the nucleophilic active site residue of peroxiredoxin-5/PRDX5, a key antioxidant protein, therefore modulating mitochondrial antioxidant ability. Also catalyzes the deglucuronidation of mycophenolic acid acyl-glucuronide, an active metabolite of the immunosuppressant drug mycophenolate. The protein is Palmitoyl-protein thioesterase ABHD10, mitochondrial of Rattus norvegicus (Rat).